The sequence spans 613 residues: Metacaspase-1 (613 aa).

Residues His404 and Cys460 contribute to the active site.

The protein belongs to the peptidase C14B family. As to quaternary structure, monomer.

Activated by Ca(2+). Cysteine protease that cleaves specifically after arginine or lysine residues. May play a role in apoptosis. This Plasmodium falciparum (isolate 3D7) protein is Metacaspase-1.